A 598-amino-acid polypeptide reads, in one-letter code: Vacuolin-A (598 aa).

Residues 482 to 539 adopt a coiled-coil conformation; the sequence is IKTTEARLKAETDNIALEQRNKAIISESQAKLSSAQREAESLLITAEAQKKASELQGE.

This sequence belongs to the vacuolin family.

Its subcellular location is the endosome membrane. The protein localises to the lysosome. This chain is Vacuolin-A (vacA), found in Dictyostelium discoideum (Social amoeba).